We begin with the raw amino-acid sequence, 513 residues long: Bifunctional purine biosynthesis protein PurH (513 aa).

In terms of domain architecture, MGS-like spans 1–147 (MIQIKRALVS…KNHKNVVVLT (147 aa)).

The protein belongs to the PurH family.

The catalysed reaction is (6R)-10-formyltetrahydrofolate + 5-amino-1-(5-phospho-beta-D-ribosyl)imidazole-4-carboxamide = 5-formamido-1-(5-phospho-D-ribosyl)imidazole-4-carboxamide + (6S)-5,6,7,8-tetrahydrofolate. It carries out the reaction IMP + H2O = 5-formamido-1-(5-phospho-D-ribosyl)imidazole-4-carboxamide. Its pathway is purine metabolism; IMP biosynthesis via de novo pathway; 5-formamido-1-(5-phospho-D-ribosyl)imidazole-4-carboxamide from 5-amino-1-(5-phospho-D-ribosyl)imidazole-4-carboxamide (10-formyl THF route): step 1/1. It participates in purine metabolism; IMP biosynthesis via de novo pathway; IMP from 5-formamido-1-(5-phospho-D-ribosyl)imidazole-4-carboxamide: step 1/1. The chain is Bifunctional purine biosynthesis protein PurH from Leptospira biflexa serovar Patoc (strain Patoc 1 / Ames).